A 248-amino-acid chain; its full sequence is 3-deoxy-manno-octulosonate cytidylyltransferase (248 aa).

The protein belongs to the KdsB family.

It localises to the cytoplasm. It carries out the reaction 3-deoxy-alpha-D-manno-oct-2-ulosonate + CTP = CMP-3-deoxy-beta-D-manno-octulosonate + diphosphate. Its pathway is nucleotide-sugar biosynthesis; CMP-3-deoxy-D-manno-octulosonate biosynthesis; CMP-3-deoxy-D-manno-octulosonate from 3-deoxy-D-manno-octulosonate and CTP: step 1/1. It functions in the pathway bacterial outer membrane biogenesis; lipopolysaccharide biosynthesis. In terms of biological role, activates KDO (a required 8-carbon sugar) for incorporation into bacterial lipopolysaccharide in Gram-negative bacteria. The protein is 3-deoxy-manno-octulosonate cytidylyltransferase of Erwinia tasmaniensis (strain DSM 17950 / CFBP 7177 / CIP 109463 / NCPPB 4357 / Et1/99).